The following is a 521-amino-acid chain: Protein DML1 (521 aa).

It belongs to the misato family.

Its subcellular location is the mitochondrion. Involved in the partitioning of the mitochondrial organelle and mitochondrial DNA (mtDNA) inheritance. The sequence is that of Protein DML1 (DML1) from Phaeosphaeria nodorum (strain SN15 / ATCC MYA-4574 / FGSC 10173) (Glume blotch fungus).